The sequence spans 69 residues: Conotoxin Eb6.22 (69 aa).

A signal peptide spans 1–17 (VLIIAVLFLTACQLTTA). A propeptide spanning residues 18 to 41 (ETYSRGRQKHRARRSTDKNSKWTR) is cleaved from the precursor. 3 disulfides stabilise this stretch: Cys-43/Cys-57, Cys-50/Cys-61, and Cys-56/Cys-68.

It belongs to the conotoxin O1 superfamily. As to expression, expressed by the venom duct.

It localises to the secreted. The sequence is that of Conotoxin Eb6.22 (E1) from Conus ebraeus (Hebrew cone).